Reading from the N-terminus, the 139-residue chain is Gas vesicle protein A (139 aa).

The interval 113–139 (EKLGDMLTSDEPEPRKATRVRSRRADR) is disordered. Over residues 129 to 139 (ATRVRSRRADR) the composition is skewed to basic residues.

This sequence belongs to the gas vesicle GvpA family. As to quaternary structure, the gas vesicle shell is 2 nm thick and consists of a single layer of this protein. It forms helical ribs nearly perpendicular to the long axis of the vesicle.

The protein resides in the gas vesicle shell. Gas vesicles are hollow, gas filled proteinaceous nanostructures found in some microorganisms. During planktonic growth they allow positioning of the organism at a favorable depth for light or nutrient acquisition. GvpA forms the protein shell. This is Gas vesicle protein A from Mycobacterium sp. (strain JLS).